A 517-amino-acid chain; its full sequence is MPAPSAADFARLRSLVAIEDLDARQSRPIEEVFTGRELTTIPVGTAEDVAAAFAKARAAQRGWAHRPVAERAAIMERFRDLVAKNRDFLMDVAQAETGKARSAAQEEIVDMMLNARYYARQAVKLLAPKRVQGLLPGVVKTVVNHHPKGVVGVISPWNYPMALSISDSIPALLAGNAVVVKPDSQTPYCTLANAELLYEAGLPRDLFAVVPGPGSVVGTAIVENCDYLMFTGSTATGRTLAEQCGRRLIGFSAELGGKNPMIVTRGAKLDVAAKAATRACFSNAGQLCISIERIYVERAVADEFTAKFGEQVRSMRLAATYDFTADMGSLISEDQIKTVSGHVDDAKAKGATVIAGGNIRPDIGPRFYEPTVLTGVTDEMECARNETFGPVVSIYPVESVAEAIEKANDTEYGLNASVWAGSKTEGEAIAAQLQAGTVNVDEGYALAFGSTAAPMGGMKASGVGRRHGADGILKYTESQTVATSRVLNLDPPLGISGTLWQKAMTPMIRAVQKLPGR.

NADP(+)-binding positions include 157–158, 181–184, and 232–233; these read WN, KPDS, and GS. The Proton acceptor role is filled by Glu-254. An NADP(+)-binding site is contributed by Leu-255. Catalysis depends on Cys-288, which acts as the Nucleophile. Glu-386 is a binding site for NADP(+).

It belongs to the aldehyde dehydrogenase family.

The catalysed reaction is succinate semialdehyde + NADP(+) + H2O = succinate + NADPH + 2 H(+). Catalyzes the NADP(+)-dependent oxidation of succinate semialdehyde to succinate. Although it has succinate semialdehyde dehydrogenase activity, is likely to act physiologically on a different aldehyde(s). This is Putative succinate-semialdehyde dehydrogenase [NADP(+)] (gabD2) from Mycolicibacterium smegmatis (strain ATCC 700084 / mc(2)155) (Mycobacterium smegmatis).